Reading from the N-terminus, the 284-residue chain is 2-dehydro-3-deoxyphosphooctonate aldolase (284 aa).

Belongs to the KdsA family.

The protein resides in the cytoplasm. It carries out the reaction D-arabinose 5-phosphate + phosphoenolpyruvate + H2O = 3-deoxy-alpha-D-manno-2-octulosonate-8-phosphate + phosphate. It participates in carbohydrate biosynthesis; 3-deoxy-D-manno-octulosonate biosynthesis; 3-deoxy-D-manno-octulosonate from D-ribulose 5-phosphate: step 2/3. Its pathway is bacterial outer membrane biogenesis; lipopolysaccharide biosynthesis. In Burkholderia vietnamiensis (strain G4 / LMG 22486) (Burkholderia cepacia (strain R1808)), this protein is 2-dehydro-3-deoxyphosphooctonate aldolase.